We begin with the raw amino-acid sequence, 651 residues long: A-type voltage-gated potassium channel KCND1 (651 aa).

Topologically, residues 1–183 are cytoplasmic; that stretch reads MAAGVATWLP…RAFENPHTST (183 aa). The interval 2 to 20 is interaction with KCNIP1, KCNIP2, and other family members; the sequence is AAGVATWLPFARAAAVGWL. Zn(2+)-binding residues include His-104, Cys-131, and Cys-132. The segment at 144–164 is disordered; that stretch reads AERLAEDEEAEQAGEGPALPA. Residues 184–205 form a helical membrane-spanning segment; the sequence is AALVFYYVTGFFIAVSVIANVV. The Extracellular portion of the chain corresponds to 206 to 230; sequence ETIPCRGTPRWPSKEQSCGDRFPTA. A helical transmembrane segment spans residues 231–252; the sequence is FFCMDTACVLIFTGEYLLRLFA. At 253 to 263 the chain is on the cytoplasmic side; sequence APSRCRFLRSV. Residues 264-284 form a helical membrane-spanning segment; it reads MSLIDVVAILPYYIGLFVPKN. At 285–287 the chain is on the extracellular side; that stretch reads DDV. The chain crosses the membrane as a helical; Voltage-sensor span at residues 288–308; it reads SGAFVTLRVFRVFRIFKFSRH. Residues 309–323 are Cytoplasmic-facing; that stretch reads SQGLRILGYTLKSCA. An S4-S5 linker region spans residues 310–323; it reads QGLRILGYTLKSCA. A helical membrane pass occupies residues 324-345; that stretch reads SELGFLLFSLTMAIIIFATVMF. Residues 346 to 359 are Extracellular-facing; sequence YAEKGTSKTNFTSI. Asn-355 carries N-linked (GlcNAc...) asparagine glycosylation. Residues 360–371 constitute an intramembrane region (helical); it reads PAAFWYTIVTMT. The Selectivity filter motif lies at 372–377; it reads TLGYGD. Residues 372-379 lie within the membrane without spanning it; that stretch reads TLGYGDMV. The Extracellular portion of the chain corresponds to 380-386; it reads PSTIAGK. The chain crosses the membrane as a helical span at residues 387-415; it reads IFGSICSLSGVLVIALPVPVIVSNFSRIY. Topologically, residues 416 to 651 are cytoplasmic; sequence HQNQRADKRR…LPETVKISSL (236 aa). A Phosphoserine modification is found at Ser-458. A required for dendritic targeting region spans residues 474–489; the sequence is FEQQHHHLLHCLEKTT. At Ser-555 the chain carries Phosphoserine. 2 disordered regions span residues 566–585 and 601–651; these read RRSPAPQTRSSLNAKPHDSL and IPTP…ISSL. Residues 626–637 show a composition bias toward polar residues; that stretch reads TPNTTLRNSSLG.

This sequence belongs to the potassium channel family. D (Shal) (TC 1.A.1.2) subfamily. Kv4.1/KCND1 sub-subfamily. As to quaternary structure, component of heteromultimeric potassium channels. Identified in potassium channel complexes containing KCND1, KCND2, KCND3, KCNIP1, KCNIP2, KCNIP3, KCNIP4, DPP6 and DPP10.

The protein resides in the cell membrane. It catalyses the reaction K(+)(in) = K(+)(out). In terms of biological role, A-type voltage-gated potassium channel that mediates transmembrane potassium transport in excitable membranes in the brain. Mediates A-type current I(SA) in suprachiasmatic nucleus (SCN) neurons. Exhibits a low-threshold A-type current with a hyperpolarized steady-state inactivation midpoint and the recovery process was steeply voltage-dependent, with recovery being markedly faster at more negative potentials. May regulates repetitive firing rates in the suprachiasmatic nucleus (SCN) neurons and circadian rhythms in neuronal excitability and behavior. Contributes to the regulation of the circadian rhythm of action potential firing in suprachiasmatic nucleus neurons, which regulates the circadian rhythm of locomotor activity. The regulatory subunit KCNIP1 modulates the kinetics of channel inactivation, increases the current amplitudes and accelerates recovery from inactivation, shifts activation in a depolarizing direction. The regulatory subunit DPP10 decreases the voltage sensitivity of the inactivation channel gating. This Mus musculus (Mouse) protein is A-type voltage-gated potassium channel KCND1.